Reading from the N-terminus, the 619-residue chain is Mitochondrial Rho GTPase 1-A (619 aa).

Residues 1–593 (MRKDVRILLV…TQADLKNSTF (593 aa)) are Cytoplasmic-facing. The 167-residue stretch at 2–168 (RKDVRILLVG…FYYAQKAVLH (167 aa)) folds into the Miro 1 domain. Residues lysine 14, glycine 16, lysine 17, threonine 18, and serine 19 each coordinate GTP. Mg(2+) is bound at residue threonine 18. Proline 35 and aspartate 57 together coordinate Mg(2+). Positions 59, 118, 119, 121, 149, and 150 each coordinate GTP. EF-hand domains lie at 184 to 219 (SCIK…CFNI) and 304 to 339 (NAYL…FPYM). Ca(2+) contacts are provided by aspartate 197, aspartate 199, aspartate 201, glutamate 208, aspartate 317, aspartate 319, aspartate 321, alanine 323, and glutamate 328. Residues 416-580 (RSVFRCNVLG…YTKLTTMAMY (165 aa)) form the Miro 2 domain. Residues arginine 427, cysteine 429, glycine 430, lysine 431, serine 432, glycine 433, lysine 447, lysine 529, aspartate 531, threonine 559, and cysteine 560 each contribute to the GTP site. Arginine 427 serves as a coordination point for Mg(2+). A helical; Anchor for type IV membrane protein membrane pass occupies residues 594-616 (WLRASVGATVFAVLGFAMYKALL). Residues 617–619 (KQR) lie on the Mitochondrial intermembrane side of the membrane.

Belongs to the mitochondrial Rho GTPase family. Homodimer.

The protein localises to the mitochondrion outer membrane. The catalysed reaction is GTP + H2O = GDP + phosphate + H(+). It catalyses the reaction ATP + H2O = ADP + phosphate + H(+). It carries out the reaction UTP + H2O = UDP + phosphate + H(+). In terms of biological role, atypical mitochondrial nucleoside-triphosphatase (NTPase) involved in mitochondrial trafficking. Probably involved in control of anterograde transport of mitochondria and their subcellular distribution. Can hydrolyze GTP, ATP and UTP. The polypeptide is Mitochondrial Rho GTPase 1-A (rhot1a) (Danio rerio (Zebrafish)).